Here is a 466-residue protein sequence, read N- to C-terminus: Sushi repeat-containing protein SRPX2 (466 aa).

The N-terminal stretch at 1-24 is a signal peptide; that stretch reads MKTGSLTQRGALLLLLLLAPAVTP. 3 Sushi domains span residues 70–120, 121–179, and 263–322; these read ATCY…YCRQ, MRCH…VCVD, and RRCP…VCTP. 4 disulfides stabilise this stretch: Cys72–Cys106, Cys92–Cys118, Cys123–Cys164, and Cys150–Cys177. In terms of domain architecture, HYR spans 178–262; it reads VDIDPPKIRC…SCKFIVKVQV (85 aa). Cystine bridges form between Cys265–Cys307 and Cys293–Cys320.

In terms of assembly, forms homooligomers. Interacts with PLAUR (via the UPAR/Ly6 domains), ADAMTS4 and CTSB. Interacts with HGF; the interaction increases the mitogenic activity of HGF. Post-translationally, contains chondroitin sulfate chains.

Its subcellular location is the secreted. The protein resides in the cytoplasm. It localises to the cell surface. The protein localises to the synapse. In terms of biological role, acts as a ligand for the urokinase plasminogen activator surface receptor. Plays a role in angiogenesis by inducing endothelial cell migration and the formation of vascular network (cords). Involved in cellular migration and adhesion. Increases the phosphorylation levels of FAK. Interacts with and increases the mitogenic activity of HGF. Promotes synapse formation. The sequence is that of Sushi repeat-containing protein SRPX2 from Rattus norvegicus (Rat).